A 450-amino-acid polypeptide reads, in one-letter code: Tubulin alpha-2 chain (450 aa).

GTP-binding residues include glutamine 11, glutamate 71, glycine 144, threonine 145, threonine 179, asparagine 206, and asparagine 228. Glutamate 71 is a binding site for Mg(2+). Glutamate 254 is an active-site residue. Threonine 349 carries the post-translational modification Phosphothreonine. Residues 430–450 are disordered; that stretch reads KDYEEVGAEGGDDEDDEGEEY. A compositionally biased stretch (acidic residues) spans 431 to 450; it reads DYEEVGAEGGDDEDDEGEEY.

It belongs to the tubulin family. As to quaternary structure, dimer of alpha and beta chains. A typical microtubule is a hollow water-filled tube with an outer diameter of 25 nm and an inner diameter of 15 nM. Alpha-beta heterodimers associate head-to-tail to form protofilaments running lengthwise along the microtubule wall with the beta-tubulin subunit facing the microtubule plus end conferring a structural polarity. Microtubules usually have 13 protofilaments but different protofilament numbers can be found in some organisms and specialized cells. Requires Mg(2+) as cofactor. In terms of processing, undergoes a tyrosination/detyrosination cycle, the cyclic removal and re-addition of a C-terminal tyrosine residue by the enzymes tubulin tyrosine carboxypeptidase (TTCP) and tubulin tyrosine ligase (TTL), respectively. Post-translationally, acetylation of alpha chains at Lys-40 stabilizes microtubules and affects affinity and processivity of microtubule motors. This modification has a role in multiple cellular functions, ranging from cell motility, cell cycle progression or cell differentiation to intracellular trafficking and signaling.

Its subcellular location is the cytoplasm. It is found in the cytoskeleton. It catalyses the reaction GTP + H2O = GDP + phosphate + H(+). Tubulin is the major constituent of microtubules, a cylinder consisting of laterally associated linear protofilaments composed of alpha- and beta-tubulin heterodimers. Microtubules grow by the addition of GTP-tubulin dimers to the microtubule end, where a stabilizing cap forms. Below the cap, tubulin dimers are in GDP-bound state, owing to GTPase activity of alpha-tubulin. The polypeptide is Tubulin alpha-2 chain (TUBA2) (Arabidopsis thaliana (Mouse-ear cress)).